The primary structure comprises 453 residues: MAYQMASLKLEMNEVVHVKPSKPTPSIVLPLSTLDHRPYPDSIWPIVHVYRSASNGKLDPAFVLKQALSKALVYYYPLAGKLVKQPDGKVAINCNNDGVPFLEAIANCNLSSLNYLDDHDILIAKQLVFDLHLQDENEYPHPVSFKLTKFQCGGFTIGMSTSHIVCDGWGACQFFRAIVELASGKSEPFVKPVWERERLIGSITTQPMPNPMDEATAAVSPFLPATDVMYELFKVDKESIRRLKMSLMKEISGNETMEQGFTSFESLAAYVWRSRARALNLNNEGKTLLVFSVQVRQHMSPPLSDGYYGTAITEGQVVLTMKELNEKPLSDIVKLVKESKNIAFTGDFIKNTIDTLESNPENFNVEEGPGATLALSDWKHLGFMPNVDFGWKEPINMVPAPCNMFEYEGLCIFLSPSKYDPSMEGGVRVFISLPSVAMPKFREEMEALKVTTP.

Catalysis depends on proton acceptor residues His163 and Asp388.

Belongs to the plant acyltransferase family. Monomer.

The catalysed reaction is tetrahydroanabasine + acetyl-CoA = ammodendrine + CoA. It participates in alkaloid biosynthesis. Tetrahydroanabasine acetyltransferase involved in the accumulation of quinolizidine type antinutritional alkaloids (QAs). QAs impart a bitter taste to plants, acting as repellents and toxicants for herbivores and predators, and possess a variety of pharmacological effects, including sedative, anticonvulsant, anti-inflammatory, antiviral, antitumor, antipyretic, anti-hepatitis B, antifibrotic, antiallergic, antidiarrheal, analgesic and antimicrobial activities. Mediates the conversion of tetrahydroanabasine into ammodendrine. The polypeptide is Tetrahydroanabasine acetyltransferase (Lupinus angustifolius (Narrow-leaved blue lupine)).